Here is a 208-residue protein sequence, read N- to C-terminus: Ribosomal RNA large subunit methyltransferase E (208 aa).

5 residues coordinate S-adenosyl-L-methionine: G62, W64, D82, D98, and D123. K163 functions as the Proton acceptor in the catalytic mechanism.

The protein belongs to the class I-like SAM-binding methyltransferase superfamily. RNA methyltransferase RlmE family.

It is found in the cytoplasm. It catalyses the reaction uridine(2552) in 23S rRNA + S-adenosyl-L-methionine = 2'-O-methyluridine(2552) in 23S rRNA + S-adenosyl-L-homocysteine + H(+). Functionally, specifically methylates the uridine in position 2552 of 23S rRNA at the 2'-O position of the ribose in the fully assembled 50S ribosomal subunit. This is Ribosomal RNA large subunit methyltransferase E from Glaesserella parasuis serovar 5 (strain SH0165) (Haemophilus parasuis).